The chain runs to 454 residues: UDP-N-acetylmuramate--L-alanine ligase (454 aa).

112–118 (GTHGKTT) is an ATP binding site.

Belongs to the MurCDEF family.

It is found in the cytoplasm. It carries out the reaction UDP-N-acetyl-alpha-D-muramate + L-alanine + ATP = UDP-N-acetyl-alpha-D-muramoyl-L-alanine + ADP + phosphate + H(+). Its pathway is cell wall biogenesis; peptidoglycan biosynthesis. Functionally, cell wall formation. The sequence is that of UDP-N-acetylmuramate--L-alanine ligase from Nitratidesulfovibrio vulgaris (strain ATCC 29579 / DSM 644 / CCUG 34227 / NCIMB 8303 / VKM B-1760 / Hildenborough) (Desulfovibrio vulgaris).